A 252-amino-acid chain; its full sequence is Flagellar brake protein YcgR (252 aa).

The PilZ domain occupies 123–238 (QRREFYRVPT…TLATVQKYIT (116 aa)).

This sequence belongs to the YcgR family. Monomer. Interacts with the flagellar basal bodies.

It localises to the bacterial flagellum basal body. Its function is as follows. Acts as a flagellar brake, regulating swimming and swarming in a bis-(3'-5') cyclic diguanylic acid (c-di-GMP)-dependent manner. Binds 1 c-di-GMP dimer per subunit. Increasing levels of c-di-GMP lead to decreased motility. This Janthinobacterium sp. (strain Marseille) (Minibacterium massiliensis) protein is Flagellar brake protein YcgR.